Here is a 403-residue protein sequence, read N- to C-terminus: Phosphoglycerate kinase (403 aa).

Substrate contacts are provided by residues 22–24 (DLN), Arg37, 60–63 (HLGR), Arg119, and Arg156. Residues Lys206, Gly302, Glu333, and 359-362 (GGDS) contribute to the ATP site.

Belongs to the phosphoglycerate kinase family. In terms of assembly, monomer.

The protein resides in the cytoplasm. The enzyme catalyses (2R)-3-phosphoglycerate + ATP = (2R)-3-phospho-glyceroyl phosphate + ADP. It participates in carbohydrate degradation; glycolysis; pyruvate from D-glyceraldehyde 3-phosphate: step 2/5. The sequence is that of Phosphoglycerate kinase from Streptomyces avermitilis (strain ATCC 31267 / DSM 46492 / JCM 5070 / NBRC 14893 / NCIMB 12804 / NRRL 8165 / MA-4680).